We begin with the raw amino-acid sequence, 789 residues long: MPLCEKGNDPIDSSTIDSLCAAFDKTLKSTPDVQKYNDAINTIFQLRQKSESGKMPADLTNSEALKDRQKIEEILTRSYQDHSESRVHLSKLIQNDIPFALNLFEILSRSSIHVFVGCFSNKDATIALLNELQIRIHYGEDTHVTYLLSIILQLLNKFKYNFKEVRFLVKELILRISEDEVKSMMLIIFAELQSSFQKDFDKAVVDFMSSLIVEAEIDVGNDPLSIIVKTLSELYPSLTTLCSEIFLTKGLSKLFKKRVFEEQDLQFTKELLRLLSSACIDETMRTYITENYLQLLERSLNVEDVQIYSALVLVKTWSFTKLTCINLKQLSEIFINAISRRIMPKIENVNESAVKLEEVPKVEMSVEALAYLSLKASVKIMIRSNESFTEILLTMIKSQKMTHCLYGLLVIMANLSTLPEESNGSSQSINDLKNYADLKGPGADKVGAEKESKEDILLFNEKYILRTELISFLKREMHNLSPNCKQQVVRVIYNITRSKNFIPQCISQGGTTIILEYLANKQDIGEPIRILGCRALTRMLIFTNPGLIFKKYSALNAIPFLFELLPRSTPVDDNPLHNDEQIKLTDNYEALLALTNLASSETSDGEEVCKHIVSTKVYWSTIENLMLDENVPLQRSTLELISNMMSHPLTIAAKFFNLENPQSLRNFNILVKLLQLSDVESQRAVAAIFANIATTIPLIAKELLTKKELIENAIQVFADQIDDIELRQRLLMLFFGLFEVIPDNGTNEVYPLLQENQKLKDALNMSLKRGDSGPEFSAAIPVILAKIKV.

Ser18 carries the phosphoserine modification.

It localises to the cytoplasm. Its function is as follows. Required for mother cell-specific ho expression. Might be required for the transport of factors (such as ASH1) that promote HO repression from the mother cell into its bud. The sequence is that of SWI5-dependent HO expression protein 4 (SHE4) from Saccharomyces cerevisiae (strain ATCC 204508 / S288c) (Baker's yeast).